The sequence spans 626 residues: DEAD-box ATP-dependent RNA helicase 16 (626 aa).

Residues 1 to 48 (MGKTKLKPVEDVNSEVVDEVEKAEEVEEQRNDREQEEEQKEEEAPKSF) form a disordered region. The stretch at 9 to 47 (VEDVNSEVVDEVEKAEEVEEQRNDREQEEEQKEEEAPKS) forms a coiled coil. Residues 12 to 27 (VNSEVVDEVEKAEEVE) show a composition bias toward acidic residues. Positions 46-74 (KSFEELGLDSRLIRALTKKGIEKPTLIQQ) match the Q motif motif. Positions 77-259 (IPYILEGKDV…KLILHNPIVL (183 aa)) constitute a Helicase ATP-binding domain. ATP is bound at residue 90–97 (AKTGSGKT). Positions 207 to 210 (DEAD) match the DEAD box motif. Positions 293–477 (ALLKLEVVQK…PFPLLTENAV (185 aa)) constitute a Helicase C-terminal domain. A coiled-coil region spans residues 356 to 385 (IATDDNSQTKKQKEEAKGEANKENKKNNKR). Positions 363 to 381 (QTKKQKEEAKGEANKENKK) are enriched in basic and acidic residues. 2 disordered regions span residues 363-388 (QTKK…RSKP) and 568-626 (AMGN…QKTV).

The protein belongs to the DEAD box helicase family. DDX56/DBP9 subfamily.

The catalysed reaction is ATP + H2O = ADP + phosphate + H(+). This Arabidopsis thaliana (Mouse-ear cress) protein is DEAD-box ATP-dependent RNA helicase 16 (RH16).